Here is a 316-residue protein sequence, read N- to C-terminus: MGIFRWNYPESSVPGVWGETTSTIDWCEENYVVSPYIAEWSNTLTNSVFILSAIYTTYSAYKNKLEKRFLLIGFGYGLVGVGSWLFHMTLKYRFQLLDELPMIYAMCIPTWSLVCEAKEALLNGDNHKKVPLFEQIFIGVIIGLAVTTASILYVIYKNVDIHQILFGVQIVVVAATAGSLTYRYVHDPLAKRNLKASMALGAILFLSGYISWLLDIHYCSFWVHVRRSILALPLGVLLEPHGWWHILTGMGIYFYIVSLEHLRVITLNVSCNYQFIWRWKVFPELIWKGRKPSTRYSLELFGPYVEDQSIEVKKEK.

Residues 1-36 (MGIFRWNYPESSVPGVWGETTSTIDWCEENYVVSPY) lie on the Lumenal side of the membrane. The cysteines at positions 27 and 219 are disulfide-linked. Residues 37–57 (IAEWSNTLTNSVFILSAIYTT) lie within the membrane without spanning it. Over 58–68 (YSAYKNKLEKR) the chain is Lumenal. An intramembrane segment occupies 69 to 89 (FLLIGFGYGLVGVGSWLFHMT). Residues 90 to 93 (LKYR) lie on the Lumenal side of the membrane. Residues 94–114 (FQLLDELPMIYAMCIPTWSLV) form a helical membrane-spanning segment. The Cytoplasmic segment spans residues 115 to 135 (CEAKEALLNGDNHKKVPLFEQ). A helical transmembrane segment spans residues 136–156 (IFIGVIIGLAVTTASILYVIY). The Lumenal portion of the chain corresponds to 157 to 160 (KNVD). The stretch at 161–181 (IHQILFGVQIVVVAATAGSLT) is an intramembrane region. Over 182–195 (YRYVHDPLAKRNLK) the chain is Lumenal. An intramembrane segment occupies 196 to 216 (ASMALGAILFLSGYISWLLDI). The Lumenal portion of the chain corresponds to 217 to 228 (HYCSFWVHVRRS). The helical transmembrane segment at 229–249 (ILALPLGVLLEPHGWWHILTG) threads the bilayer. The Cytoplasmic portion of the chain corresponds to 250 to 316 (MGIYFYIVSL…DQSIEVKKEK (67 aa)).

It belongs to the alkaline ceramidase family.

Its subcellular location is the endoplasmic reticulum membrane. It carries out the reaction N-hexanoyl-sphinganine + H2O = hexanoate + sphinganine. The enzyme catalyses sphinganine + hexadecanoate = N-hexadecanoylsphinganine + H2O. The catalysed reaction is N-hexadecanoyl-(4R)-hydroxysphinganine + H2O = (4R)-hydroxysphinganine + hexadecanoate. It catalyses the reaction N-hexadecanoylsphing-4-enine + H2O = sphing-4-enine + hexadecanoate. It carries out the reaction an N-acyl-(4R)-4-hydroxysphinganine + H2O = (4R)-hydroxysphinganine + a fatty acid. Alkaline ceramidase that hydrolyzes phytoceramide and also dihydroceramide into phytosphingosine or dihydrosphingosine. Prefers phytoceramide. Also has reverse activity as acyl-CoA-independent ceramide synthase, catalyzing synthesis of phytoceramide and dihydroceramide from palmitic acid and phytosphingosine or dihydrosphingosine. Is not responsible for the breakdown of unsaturated ceramide. Preferentially uses very long chain fatty acids (C-24 and C-26) in vivo compared to C-16 in vitro. This chain is Alkaline ceramidase YPC1 (YPC1), found in Saccharomyces cerevisiae (strain ATCC 204508 / S288c) (Baker's yeast).